The primary structure comprises 501 residues: MESITSIEMYVADRNAEWLGVPRLVLMENAGAAVARNVLRKFPTAKRILVVCGTGDNGGDGYVAARHLHAAGRTVRVIALGEPREELARINYQAVTRLWGVEVKAAQLPLELLALQDWFMWAEVIVDAVLGTGIRGVLREPHATAIELMNISPAPKVAVDVPSGLDPDTGEVRDKAVRAALTVTFHKAKRGLLAPGAQRYVGELVVEPIGIPPEAELVVGPGDFAYLNFTRRADSKKGDHGRVLVIGGSLEYSGAPVYVALAALRAGVDLAVIAAPEPAAYAAKAISPDIIAIPLEGPRLSTKHVDKLASLAERFNVVAMGPGLGVEEETQEAVRELFRRLAGKRAMVIDADALKALRGVRASGAVVYTPHAGEFKALTGAEPPQSLSERMAVVREQAAALGGVILLKGRYDVISDGVRVKVNMTGTPAMTVGGTGDVLTGLVAAFLTKTSDPLEAAAVAAFVNGLAGEDAAAELGFHITASDLIERLPRVIRRYAFESIR.

Residues 1-221 (MESITSIEMY…PPEAELVVGP (221 aa)) are NAD(P)H-hydrate epimerase. The YjeF N-terminal domain maps to 9–217 (MYVADRNAEW…PIGIPPEAEL (209 aa)). Residues 56 to 60 (DNGGD) form an NADPHX 1; for epimerase activity region. The K(+) site is built by N57 and D127. The interval 131 to 137 (GTGIRGV) is NADPHX 1; for epimerase activity. D160 contacts (6S)-NADPHX. S163 is a K(+) binding site. The region spanning 220–495 (GPGDFAYLNF…ERLPRVIRRY (276 aa)) is the YjeF C-terminal domain. An ADP-dependent (S)-NAD(P)H-hydrate dehydratase region spans residues 221-501 (PGDFAYLNFT…IRRYAFESIR (281 aa)). G323 provides a ligand contact to (6S)-NADPHX. Residues 371–377 (HAGEFKA) are NADPHX 2; for dehydratase activity. Residues 408 to 412 (KGRYD) and 427 to 436 (TPAMTVGGTG) each bind ADP. D437 provides a ligand contact to (6S)-NADPHX.

In the N-terminal section; belongs to the NnrE/AIBP family. This sequence in the C-terminal section; belongs to the NnrD/CARKD family. The cofactor is K(+).

The enzyme catalyses (6S)-NADHX + ADP = AMP + phosphate + NADH + H(+). It catalyses the reaction (6S)-NADPHX + ADP = AMP + phosphate + NADPH + H(+). The catalysed reaction is (6R)-NADHX = (6S)-NADHX. It carries out the reaction (6R)-NADPHX = (6S)-NADPHX. Bifunctional enzyme that catalyzes the epimerization of the S- and R-forms of NAD(P)HX and the dehydration of the S-form of NAD(P)HX at the expense of ADP, which is converted to AMP. This allows the repair of both epimers of NAD(P)HX, a damaged form of NAD(P)H that is a result of enzymatic or heat-dependent hydration. This Pyrobaculum aerophilum (strain ATCC 51768 / DSM 7523 / JCM 9630 / CIP 104966 / NBRC 100827 / IM2) protein is Bifunctional NAD(P)H-hydrate repair enzyme Nnr (nnr).